A 397-amino-acid polypeptide reads, in one-letter code: Acetate kinase (397 aa).

Asn7 contributes to the Mg(2+) binding site. Lys14 lines the ATP pocket. Arg90 contributes to the substrate binding site. The active-site Proton donor/acceptor is the Asp147. ATP contacts are provided by residues 207–211, 282–284, and 330–334; these read HLGNG, DFR, and GLGEN. A Mg(2+)-binding site is contributed by Glu383.

The protein belongs to the acetokinase family. In terms of assembly, homodimer. Mg(2+) is required as a cofactor. It depends on Mn(2+) as a cofactor.

It is found in the cytoplasm. The catalysed reaction is acetate + ATP = acetyl phosphate + ADP. The protein operates within metabolic intermediate biosynthesis; acetyl-CoA biosynthesis; acetyl-CoA from acetate: step 1/2. Catalyzes the formation of acetyl phosphate from acetate and ATP. Can also catalyze the reverse reaction. The polypeptide is Acetate kinase (Clostridium botulinum (strain Kyoto / Type A2)).